Consider the following 319-residue polypeptide: uncharacterized protein (319 aa).

Residues 1 to 23 (MFPFRRNVLAFAALLALSSPVLA) form the signal peptide.

The protein to H.influenzae HI_0755.

This is an uncharacterized protein from Escherichia coli (strain K12).